A 339-amino-acid chain; its full sequence is DNA repair protein RAD51 homolog 1 (339 aa).

The segment at Met1 to Pro22 is disordered. Position 2 is an N-acetylalanine (Ala2). The residue at position 13 (Thr13) is a Phosphothreonine. The residue at position 14 (Ser14) is a Phosphoserine. In terms of domain architecture, HhH spans Thr48–Glu77. A Phosphotyrosine; by ABL1 modification is found at Tyr54. Residues Lys58 and Lys64 each participate in a glycyl lysine isopeptide (Lys-Gly) (interchain with G-Cter in ubiquitin) cross-link. Gly127–Thr134 lines the ATP pocket. Positions Asp184 to Asp257 are interaction with PALB2. Residues Leu245 to Gly260 carry the Nuclear export signal; masked by the interaction with BRCA2 motif. A Phosphothreonine; by CHEK1 modification is found at Thr309.

This sequence belongs to the RecA family. RAD51 subfamily. In terms of assembly, forms linear homooligomers, giving rise to a RAD51 nucleoprotein filament, which is essential for strand-pairing reactions during DNA recombination. Interacts with BRCA1 and either directly or indirectly with p53. Interacts with XRCC3, RAD54L and RAD54B. Interacts with the BCDX2 subcomplex RAD51C:RAD51B. Component of the homologous recombination repair (HR) complex composed of ERCC5/XPG, BRCA2, PALB2, DSS1 and RAD51. Interacts directly with PALB2 which may serve as a scaffold for a HR complex containing PALB2, BRCA2, RAD51C, RAD51 and XRCC3. Interacts with RAD51AP1 and RAD51AP2. Interacts with CHEK1, and this may require prior phosphorylation of CHEK1. Interacts with the MND1-PSMC3IP heterodimer. Found in a complex, at least composed of BLM, RAD51 and SPIDR; the complex formation is mediated by SPIDR. Interacts with SPIDR; the interaction is direct and recruits RAD51 to DNA damage sites. Interacts with FIGNL1 (via N-terminal one-half region); the interaction is direct. Interacts with RAD51AP1 (via C-terminal region); the interaction is direct. Interacts with NABP2, RPA1, PALB2 and RAD51. Interacts with SWI5/C9orf119, and at lower level with SFR1/MEIR5. Interacts with hyperphosphorylated RPA2; this interaction is necessary for efficient recruitment to chromatin in response to DNA damage. Interacts with SWSAP1; involved in homologous recombination repair. Interacts with PARPBP, BRCA2 and RECQL5; these interactions interfere with the formation of the RAD51-DNA homologous recombination structure. Interacts with POLQ; POLQ acts as an inhibitor of homology-recombination repair (HR) pathway by limiting RAD51 accumulation at resected ends. Interacts with POLN. Interacts with FBH1. Interacts with RFWD3. Interacts with the MCM8-MCM9 complex; the interaction recruits RAD51 to DNA damage sites. Component of a multiprotein complex with MEIOB and SPATA22. Interacts with the complex BRME1:HSF2BP:BRCA2. Interacts with HELQ; stimulating HELQ DNA helicase activity and ability to unwing DNA. Interacts with MMS22L; the interaction is direct and promotes recruitment of RAD51 to sites of DNA damage. Interacts with the ATAD5 RFC-like complex. Within the ATAD5 RFC-like complex, interacts with ATAD5 (via N-terminus); the interaction is direct and enhanced under replication stress. Interacts with WDR48; the interaction is enhanced under replication stress. Interacts with DNA helicase ZGRF1; the interaction promotes RAD51 strand exchange activity. Interacts (when phosphorylated) with TOPBP1; interaction takes place following phosphorylation by CK2 and PLK1 and promotes recruitment to DNA damage sites. Interacts with GRB2; this interaction inhibits RAD51 ATPase activity to stabilize RAD51 on stalled replication forks. Ubiquitinated by the SCF(FBH1) E3 ubiquitin ligase complex, regulating RAD51 subcellular location and preventing its association with DNA. Ubiquitinated by RFWD3 in response to DNA damage: ubiquitination leads to degradation by the proteasome, promoting homologous recombination. In terms of processing, phosphorylation of Thr-309 by CHEK1 may enhance association with chromatin at sites of DNA damage and promote DNA repair by homologous recombination. Phosphorylated at Ser-14 by PLK1, triggering phosphorylation at Thr-13 by CK2, thereby promoting interaction with TOPBP1 and recruitment to DNA damage sites during S-phase. Phosphorylation by ABL1 inhibits function. Expressed in the testes (at protein level). Expressed in the brain (at protein level). Expressed in the thymus, spleen, ovary and small intestine.

The protein resides in the nucleus. Its subcellular location is the cytoplasm. It localises to the perinuclear region. It is found in the mitochondrion matrix. The protein localises to the chromosome. The protein resides in the cytoskeleton. Its subcellular location is the microtubule organizing center. It localises to the centrosome. In terms of biological role, plays an important role in homologous strand exchange, a key step in DNA repair through homologous recombination (HR). Binds to single-stranded DNA in an ATP-dependent manner to form nucleoprotein filaments which are essential for the homology search and strand exchange. Catalyzes the recognition of homology and strand exchange between homologous DNA partners to form a joint molecule between a processed DNA break and the repair template. Recruited to resolve stalled replication forks during replication stress. Part of a PALB2-scaffolded HR complex containing BRCA2 and RAD51C and which is thought to play a role in DNA repair by HR. Plays a role in regulating mitochondrial DNA copy number under conditions of oxidative stress in the presence of RAD51C and XRCC3. Also involved in interstrand cross-link repair. In Mus musculus (Mouse), this protein is DNA repair protein RAD51 homolog 1.